Reading from the N-terminus, the 129-residue chain is Translation initiation factor 5A (129 aa).

Lys36 is subject to Hypusine.

It belongs to the eIF-5A family.

It is found in the cytoplasm. Functionally, functions by promoting the formation of the first peptide bond. In Methanobrevibacter smithii (strain ATCC 35061 / DSM 861 / OCM 144 / PS), this protein is Translation initiation factor 5A (eIF5A).